Here is a 308-residue protein sequence, read N- to C-terminus: MMRVVVLGAAAGGGVPQWNCGCSVCRAAFADRDLRRTQASMAVSADGDHWFLINASPDLRQQVIATPQLHPKPGALRHSPIAGVILTNGEVDAVAGLLSMREGSPFAIYAHAKVLAILKANSIFNVLNEKLVSRRPIETDQRFEPTLPDGTLSGLDVVAFSVPGKGAWYLEGQAHPGGDAADGDTLGLTITDKATGQSIHVLTACARVTDDLKARLAGAPLVLFDGTVWRDDELITAGLGHKTGQAMGHIAMSGDEGAIAALGDLDIARKLFVHINNSNPVLLSCSAEREAAERAGWQVPADGTEVTL.

This sequence belongs to the PqqB family.

It functions in the pathway cofactor biosynthesis; pyrroloquinoline quinone biosynthesis. Its function is as follows. May be involved in the transport of PQQ or its precursor to the periplasm. This is Coenzyme PQQ synthesis protein B from Rhodopseudomonas palustris (strain BisB5).